The sequence spans 201 residues: MQEFTKVTGVAAPMPLVNIDTDMIIPKQFLKTIQRSGLGKNLFDEMRYNPDGSEIPEFVLNQPAYRDAQIIVAGDNFGCGSSREHAPWALLDFGIRCVISTSFADIFYNNCFKNGILPIVMPPEVVEVLMEDARRGANARMTVDLEAQTVTTSDGQSFPFQVDSFRRHCLMNGLDDIGLTLEKAASIDGFERDLATLRPWV.

The protein belongs to the LeuD family. LeuD type 1 subfamily. As to quaternary structure, heterodimer of LeuC and LeuD.

The enzyme catalyses (2R,3S)-3-isopropylmalate = (2S)-2-isopropylmalate. Its pathway is amino-acid biosynthesis; L-leucine biosynthesis; L-leucine from 3-methyl-2-oxobutanoate: step 2/4. Functionally, catalyzes the isomerization between 2-isopropylmalate and 3-isopropylmalate, via the formation of 2-isopropylmaleate. The chain is 3-isopropylmalate dehydratase small subunit from Cereibacter sphaeroides (strain ATCC 17029 / ATH 2.4.9) (Rhodobacter sphaeroides).